The sequence spans 282 residues: NADPH-dependent 7-cyano-7-deazaguanine reductase (282 aa).

Residue 82-84 (IES) coordinates substrate. Residue 84–85 (SK) participates in NADPH binding. Cys189 functions as the Thioimide intermediate in the catalytic mechanism. Asp196 acts as the Proton donor in catalysis. Residue 228–229 (HE) participates in substrate binding. 257–258 (RG) is a binding site for NADPH.

The protein belongs to the GTP cyclohydrolase I family. QueF type 2 subfamily. In terms of assembly, homodimer.

Its subcellular location is the cytoplasm. The catalysed reaction is 7-aminomethyl-7-carbaguanine + 2 NADP(+) = 7-cyano-7-deazaguanine + 2 NADPH + 3 H(+). Its pathway is tRNA modification; tRNA-queuosine biosynthesis. Its function is as follows. Catalyzes the NADPH-dependent reduction of 7-cyano-7-deazaguanine (preQ0) to 7-aminomethyl-7-deazaguanine (preQ1). The sequence is that of NADPH-dependent 7-cyano-7-deazaguanine reductase from Delftia acidovorans (strain DSM 14801 / SPH-1).